A 754-amino-acid polypeptide reads, in one-letter code: 1,4-alpha-glucan branching enzyme GlgB (754 aa).

The Nucleophile role is filled by D431. E484 functions as the Proton donor in the catalytic mechanism.

It belongs to the glycosyl hydrolase 13 family. GlgB subfamily. As to quaternary structure, monomer.

The enzyme catalyses Transfers a segment of a (1-&gt;4)-alpha-D-glucan chain to a primary hydroxy group in a similar glucan chain.. The protein operates within glycan biosynthesis; glycogen biosynthesis. Its function is as follows. Catalyzes the formation of the alpha-1,6-glucosidic linkages in glycogen by scission of a 1,4-alpha-linked oligosaccharide from growing alpha-1,4-glucan chains and the subsequent attachment of the oligosaccharide to the alpha-1,6 position. In Prochlorococcus marinus (strain MIT 9215), this protein is 1,4-alpha-glucan branching enzyme GlgB.